We begin with the raw amino-acid sequence, 194 residues long: Imidazoleglycerol-phosphate dehydratase (194 aa).

This sequence belongs to the imidazoleglycerol-phosphate dehydratase family.

It is found in the cytoplasm. The catalysed reaction is D-erythro-1-(imidazol-4-yl)glycerol 3-phosphate = 3-(imidazol-4-yl)-2-oxopropyl phosphate + H2O. It functions in the pathway amino-acid biosynthesis; L-histidine biosynthesis; L-histidine from 5-phospho-alpha-D-ribose 1-diphosphate: step 6/9. The sequence is that of Imidazoleglycerol-phosphate dehydratase from Thermus thermophilus (strain ATCC BAA-163 / DSM 7039 / HB27).